Consider the following 951-residue polypeptide: Valine--tRNA ligase (951 aa).

Residues 42–52 (PNVTGSLHMGH) carry the 'HIGH' region motif. A 'KMSKS' region motif is present at residues 554-558 (KMSKS). Lys557 provides a ligand contact to ATP. A coiled-coil region spans residues 880–944 (AGLINKEDEL…AEAKAKLIEQ (65 aa)).

It belongs to the class-I aminoacyl-tRNA synthetase family. ValS type 1 subfamily. As to quaternary structure, monomer.

The protein resides in the cytoplasm. The catalysed reaction is tRNA(Val) + L-valine + ATP = L-valyl-tRNA(Val) + AMP + diphosphate. Functionally, catalyzes the attachment of valine to tRNA(Val). As ValRS can inadvertently accommodate and process structurally similar amino acids such as threonine, to avoid such errors, it has a 'posttransfer' editing activity that hydrolyzes mischarged Thr-tRNA(Val) in a tRNA-dependent manner. This is Valine--tRNA ligase (valS) from Escherichia coli (strain K12).